The primary structure comprises 389 residues: 1-deoxy-D-xylulose 5-phosphate reductoisomerase (389 aa).

Residues S11, G12, S13, V14, N39, and N122 each coordinate NADPH. K123 contacts 1-deoxy-D-xylulose 5-phosphate. Position 124 (E124) interacts with NADPH. D148 is a binding site for Mn(2+). 1-deoxy-D-xylulose 5-phosphate is bound by residues S149, E150, S174, and H197. E150 is a binding site for Mn(2+). G203 contacts NADPH. The 1-deoxy-D-xylulose 5-phosphate site is built by S210, N215, K216, and E219. E219 is a binding site for Mn(2+).

Belongs to the DXR family. The cofactor is Mg(2+). Mn(2+) is required as a cofactor.

The catalysed reaction is 2-C-methyl-D-erythritol 4-phosphate + NADP(+) = 1-deoxy-D-xylulose 5-phosphate + NADPH + H(+). It functions in the pathway isoprenoid biosynthesis; isopentenyl diphosphate biosynthesis via DXP pathway; isopentenyl diphosphate from 1-deoxy-D-xylulose 5-phosphate: step 1/6. Functionally, catalyzes the NADPH-dependent rearrangement and reduction of 1-deoxy-D-xylulose-5-phosphate (DXP) to 2-C-methyl-D-erythritol 4-phosphate (MEP). The sequence is that of 1-deoxy-D-xylulose 5-phosphate reductoisomerase from Leptospira borgpetersenii serovar Hardjo-bovis (strain JB197).